A 1031-amino-acid chain; its full sequence is Beta-galactosidase (1031 aa).

Residues Asn100 and Asp198 each contribute to the substrate site. Asp198 serves as a coordination point for Na(+). Mg(2+) is bound by residues Glu412, His414, and Glu457. Substrate is bound by residues Glu457 and 533–536 (EYAH). Glu457 acts as the Proton donor in catalysis. The active-site Nucleophile is Glu533. Asn593 contacts Mg(2+). Na(+) contacts are provided by Phe597 and Asn600. Positions 600 and 1005 each coordinate substrate.

Belongs to the glycosyl hydrolase 2 family. In terms of assembly, homotetramer. The cofactor is Mg(2+). Na(+) serves as cofactor.

It carries out the reaction Hydrolysis of terminal non-reducing beta-D-galactose residues in beta-D-galactosides.. The sequence is that of Beta-galactosidase from Vibrio vulnificus (strain YJ016).